A 136-amino-acid polypeptide reads, in one-letter code: HTH-type transcriptional regulator CysB (136 aa).

One can recognise an HTH lysR-type domain in the interval 1–59 (MDVRQLRSLVTLVEVRFSVSRAAECLHLVQSAVTQHLKQLEAELGTRLFVRHGKRLVGL). Positions 19–38 (VSRAAECLHLVQSAVTQHLK) form a DNA-binding region, H-T-H motif.

It belongs to the LysR transcriptional regulatory family.

This protein is a positive regulator of gene expression for the cysteine regulon. This chain is HTH-type transcriptional regulator CysB (cysB), found in Thiocapsa roseopersicina.